Reading from the N-terminus, the 140-residue chain is Large ribosomal subunit protein bL17 (140 aa).

The protein belongs to the bacterial ribosomal protein bL17 family. Part of the 50S ribosomal subunit. Contacts protein L32.

In Rhizobium etli (strain ATCC 51251 / DSM 11541 / JCM 21823 / NBRC 15573 / CFN 42), this protein is Large ribosomal subunit protein bL17.